A 240-amino-acid chain; its full sequence is Cysteine-rich venom protein catrin (240 aa).

The N-terminal stretch at 1–19 is a signal peptide; that stretch reads MIAFIVLPILAAVLQQSSG. In terms of domain architecture, SCP spans 38–166; sequence VDLHNFLRRS…KYSYFYVCQY (129 aa). 8 cysteine pairs are disulfide-bonded: C75/C153, C92/C167, C148/C164, C186/C193, C189/C198, C202/C235, C211/C229, and C220/C233. The 34-residue stretch at 202–235 folds into the ShKT domain; sequence CTKEDKYTNCKSLVQQAGCQDKQMQSDCPAICFC.

It belongs to the CRISP family. As to expression, expressed by the venom gland.

It is found in the secreted. Its function is as follows. Catrin-2 weakly blocks contraction of smooth muscle elicited by high potassium-induced depolarization, but does not block caffeine-stimulated contraction. Catrin-1 has no significant effect. May target voltage-gated calcium channels on smooth muscle. The chain is Cysteine-rich venom protein catrin from Crotalus atrox (Western diamondback rattlesnake).